The primary structure comprises 501 residues: G protein-activated inward rectifier potassium channel 1 (501 aa).

A disordered region spans residues 1–40 (MSALRRKFGDDYQVVTTSSSGSGLQPQGPGQGPQQQLVPK). Topologically, residues 1–80 (MSALRRKFGD…LFTTLVDLKW (80 aa)) are cytoplasmic. Residues 18–37 (SSSGSGLQPQGPGQGPQQQL) are compositionally biased toward low complexity. A helical membrane pass occupies residues 81–105 (RWNLFIFILTYTVAWLFMASMWWVI). Over 106 to 129 (AYTRGDLNKAHVGNYTPCVANVYN) the chain is Extracellular. Residue Asn119 is glycosylated (N-linked (GlcNAc...) asparagine). The helical; Pore-forming intramembrane region spans 130–141 (FPSAFLFFIETE). An intramembrane region (pore-forming) is located at residues 142-148 (ATIGYGY). Positions 143–148 (TIGYGY) match the Selectivity filter motif. Residues 149–157 (RYITDKCPE) lie on the Extracellular side of the membrane. The helical transmembrane segment at 158–179 (GIILFLFQSILGSIVDAFLIGC) threads the bilayer. The Cytoplasmic segment spans residues 180-501 (MFIKMSQPKK…LRKMNSDRFT (322 aa)). The interval 182 to 209 (IKMSQPKKRAETLMFSEHAVISMRDGKL) is polyphosphoinositide (PIP2)-binding. Ser385 and Ser424 each carry phosphoserine. Over residues 456–467 (TKMLSDPMSQSV) the composition is skewed to polar residues. Residues 456–501 (TKMLSDPMSQSVADLPPKLQKMAGGPTRMEGNLPAKLRKMNSDRFT) are disordered.

The protein belongs to the inward rectifier-type potassium channel (TC 1.A.2.1) family. KCNJ3 subfamily. Associates with KCNJ5/GIRK4 or KCNJ6/GIRK2 to form a G-protein activated heteromultimer pore-forming unit. The resulting inward current is much larger. Associates with KCNJ9/GIRK3 to form a G-protein activated heteromultimer pore-forming unit.

The protein localises to the membrane. It catalyses the reaction K(+)(in) = K(+)(out). Heteromultimer composed of KCNJ3/GIRK1 and KCNJ5/GIRK4 is activated by phosphatidylinositol 4,5 biphosphate (PtdIns(4,5)P2). Functionally, inward rectifier potassium channels are characterized by a greater tendency to allow potassium to flow into the cell rather than out of it. Their voltage dependence is regulated by the concentration of extracellular potassium; as external potassium is raised, the voltage range of the channel opening shifts to more positive voltages. The inward rectification is mainly due to the blockage of outward current by internal magnesium. This potassium channel is controlled by G proteins. This receptor plays a crucial role in regulating the heartbeat. Forms a functional channel in association with KCNJ9/GIRK3. This Rattus norvegicus (Rat) protein is G protein-activated inward rectifier potassium channel 1 (Kcnj3).